A 148-amino-acid polypeptide reads, in one-letter code: SsrA-binding protein (148 aa).

A disordered region spans residues alanine 119–glycine 148. Residues aspartate 126–arginine 142 are compositionally biased toward basic and acidic residues.

Belongs to the SmpB family.

The protein localises to the cytoplasm. Required for rescue of stalled ribosomes mediated by trans-translation. Binds to transfer-messenger RNA (tmRNA), required for stable association of tmRNA with ribosomes. tmRNA and SmpB together mimic tRNA shape, replacing the anticodon stem-loop with SmpB. tmRNA is encoded by the ssrA gene; the 2 termini fold to resemble tRNA(Ala) and it encodes a 'tag peptide', a short internal open reading frame. During trans-translation Ala-aminoacylated tmRNA acts like a tRNA, entering the A-site of stalled ribosomes, displacing the stalled mRNA. The ribosome then switches to translate the ORF on the tmRNA; the nascent peptide is terminated with the 'tag peptide' encoded by the tmRNA and targeted for degradation. The ribosome is freed to recommence translation, which seems to be the essential function of trans-translation. This is SsrA-binding protein from Paraburkholderia xenovorans (strain LB400).